Consider the following 616-residue polypeptide: Chaperone protein HscA (616 aa).

The protein belongs to the heat shock protein 70 family.

In terms of biological role, chaperone involved in the maturation of iron-sulfur cluster-containing proteins. Has a low intrinsic ATPase activity which is markedly stimulated by HscB. Involved in the maturation of IscU. The polypeptide is Chaperone protein HscA (Salmonella paratyphi A (strain ATCC 9150 / SARB42)).